A 70-amino-acid chain; its full sequence is Conotoxin Ep11.12 (70 aa).

Residues 1 to 26 (MMFRVTSVGCFLLVILSLNLVVLTNA) form the signal peptide. 4 disulfide bridges follow: Cys-27–Cys-41, Cys-34–Cys-46, Cys-40–Cys-50, and Cys-45–Cys-54. Pro-57 carries the proline amide modification. The propeptide occupies 61 to 70 (AKLREFFRQR).

The protein belongs to the conotoxin I2 superfamily. Expressed by the venom duct.

It localises to the secreted. This chain is Conotoxin Ep11.12, found in Conus episcopatus (Bishop's cone).